We begin with the raw amino-acid sequence, 189 residues long: ATP-dependent protease subunit HslV (189 aa).

The active site involves threonine 12. Residues serine 172, cysteine 175, and threonine 178 each coordinate Na(+).

This sequence belongs to the peptidase T1B family. HslV subfamily. A double ring-shaped homohexamer of HslV is capped on each side by a ring-shaped HslU homohexamer. The assembly of the HslU/HslV complex is dependent on binding of ATP.

It localises to the cytoplasm. The enzyme catalyses ATP-dependent cleavage of peptide bonds with broad specificity.. With respect to regulation, allosterically activated by HslU binding. Its function is as follows. Protease subunit of a proteasome-like degradation complex believed to be a general protein degrading machinery. This Ehrlichia canis (strain Jake) protein is ATP-dependent protease subunit HslV.